The primary structure comprises 290 residues: 33 kDa chaperonin (290 aa).

Cystine bridges form between cysteine 235–cysteine 237 and cysteine 268–cysteine 271.

This sequence belongs to the HSP33 family. In terms of processing, under oxidizing conditions two disulfide bonds are formed involving the reactive cysteines. Under reducing conditions zinc is bound to the reactive cysteines and the protein is inactive.

Its subcellular location is the cytoplasm. Its function is as follows. Redox regulated molecular chaperone. Protects both thermally unfolding and oxidatively damaged proteins from irreversible aggregation. Plays an important role in the bacterial defense system toward oxidative stress. This is 33 kDa chaperonin from Streptococcus pyogenes serotype M3 (strain ATCC BAA-595 / MGAS315).